We begin with the raw amino-acid sequence, 372 residues long: 4-hydroxy-3-methylbut-2-en-1-yl diphosphate synthase (flavodoxin) (372 aa).

4 residues coordinate [4Fe-4S] cluster: cysteine 270, cysteine 273, cysteine 305, and glutamate 312.

It belongs to the IspG family. The cofactor is [4Fe-4S] cluster.

It carries out the reaction (2E)-4-hydroxy-3-methylbut-2-enyl diphosphate + oxidized [flavodoxin] + H2O + 2 H(+) = 2-C-methyl-D-erythritol 2,4-cyclic diphosphate + reduced [flavodoxin]. Its pathway is isoprenoid biosynthesis; isopentenyl diphosphate biosynthesis via DXP pathway; isopentenyl diphosphate from 1-deoxy-D-xylulose 5-phosphate: step 5/6. Converts 2C-methyl-D-erythritol 2,4-cyclodiphosphate (ME-2,4cPP) into 1-hydroxy-2-methyl-2-(E)-butenyl 4-diphosphate. The protein is 4-hydroxy-3-methylbut-2-en-1-yl diphosphate synthase (flavodoxin) of Salmonella typhi.